The following is a 392-amino-acid chain: Stilbene synthase 5 (392 aa).

55-58 (KFNR) contributes to the substrate binding site. Cysteine 164 is an active-site residue. Residues leucine 267 and 305–307 (GGP) each bind substrate.

The protein belongs to the thiolase-like superfamily. Chalcone/stilbene synthases family. Homodimer.

The protein localises to the cytoplasm. The enzyme catalyses 4-coumaroyl-CoA + 3 malonyl-CoA + 3 H(+) = trans-resveratrol + 4 CO2 + 4 CoA. It participates in phytoalexin biosynthesis; 3,4',5-trihydroxystilbene biosynthesis; 3,4',5-trihydroxystilbene from trans-4-coumarate: step 2/2. Functionally, mediates resistance to pathogens which are sensitive to stilbenes. The protein is Stilbene synthase 5 of Vitis vinifera (Grape).